Reading from the N-terminus, the 444-residue chain is tRNA-2-methylthio-N(6)-dimethylallyladenosine synthase (444 aa).

In terms of domain architecture, MTTase N-terminal spans 8–122; that stretch reads KTFYIETFGC…LAEMLVQIES (115 aa). [4Fe-4S] cluster is bound by residues cysteine 17, cysteine 53, cysteine 85, cysteine 160, cysteine 164, and cysteine 167. A Radical SAM core domain is found at 146–376; that stretch reads RGNAHRGYIT…MEHQREIQRA (231 aa). Positions 379–444 constitute a TRAM domain; that stretch reads RKHIGETIEV…PNSLVGELVG (66 aa).

This sequence belongs to the methylthiotransferase family. MiaB subfamily. As to quaternary structure, monomer. [4Fe-4S] cluster is required as a cofactor.

It localises to the cytoplasm. It carries out the reaction N(6)-dimethylallyladenosine(37) in tRNA + (sulfur carrier)-SH + AH2 + 2 S-adenosyl-L-methionine = 2-methylsulfanyl-N(6)-dimethylallyladenosine(37) in tRNA + (sulfur carrier)-H + 5'-deoxyadenosine + L-methionine + A + S-adenosyl-L-homocysteine + 2 H(+). In terms of biological role, catalyzes the methylthiolation of N6-(dimethylallyl)adenosine (i(6)A), leading to the formation of 2-methylthio-N6-(dimethylallyl)adenosine (ms(2)i(6)A) at position 37 in tRNAs that read codons beginning with uridine. The protein is tRNA-2-methylthio-N(6)-dimethylallyladenosine synthase of Koribacter versatilis (strain Ellin345).